A 326-amino-acid chain; its full sequence is Pyruvate dehydrogenase E1 component subunit alpha (326 aa).

Heterodimer of an alpha and a beta chain. Thiamine diphosphate is required as a cofactor.

The enzyme catalyses N(6)-[(R)-lipoyl]-L-lysyl-[protein] + pyruvate + H(+) = N(6)-[(R)-S(8)-acetyldihydrolipoyl]-L-lysyl-[protein] + CO2. Its function is as follows. The pyruvate dehydrogenase complex catalyzes the overall conversion of pyruvate to acetyl-CoA and CO(2). It contains multiple copies of three enzymatic components: pyruvate dehydrogenase (E1), dihydrolipoamide acetyltransferase (E2) and lipoamide dehydrogenase (E3). The sequence is that of Pyruvate dehydrogenase E1 component subunit alpha (pdhA) from Rickettsia typhi (strain ATCC VR-144 / Wilmington).